The sequence spans 291 residues: tRNA dimethylallyltransferase (291 aa).

Residue 5–12 (GPTAGGKS) coordinates ATP. A substrate-binding site is contributed by 7-12 (TAGGKS). Residues 30-33 (DSMQ) form an interaction with substrate tRNA region.

Belongs to the IPP transferase family. Monomer. It depends on Mg(2+) as a cofactor.

The catalysed reaction is adenosine(37) in tRNA + dimethylallyl diphosphate = N(6)-dimethylallyladenosine(37) in tRNA + diphosphate. Its function is as follows. Catalyzes the transfer of a dimethylallyl group onto the adenine at position 37 in tRNAs that read codons beginning with uridine, leading to the formation of N6-(dimethylallyl)adenosine (i(6)A). In Frankia casuarinae (strain DSM 45818 / CECT 9043 / HFP020203 / CcI3), this protein is tRNA dimethylallyltransferase.